The chain runs to 178 residues: uncharacterized protein (178 aa).

This is an uncharacterized protein from Rhizobium fredii (Sinorhizobium fredii).